Consider the following 247-residue polypeptide: Probable transcriptional regulatory protein LBF_0056 (247 aa).

Belongs to the TACO1 family.

Its subcellular location is the cytoplasm. The polypeptide is Probable transcriptional regulatory protein LBF_0056 (Leptospira biflexa serovar Patoc (strain Patoc 1 / Ames)).